Consider the following 76-residue polypeptide: Small ribosomal subunit protein bS18 (76 aa).

It belongs to the bacterial ribosomal protein bS18 family. In terms of assembly, part of the 30S ribosomal subunit. Forms a tight heterodimer with protein bS6.

In terms of biological role, binds as a heterodimer with protein bS6 to the central domain of the 16S rRNA, where it helps stabilize the platform of the 30S subunit. The sequence is that of Small ribosomal subunit protein bS18 from Pseudomonas fluorescens (strain ATCC BAA-477 / NRRL B-23932 / Pf-5).